The primary structure comprises 68 residues: Pleurocidin-like peptide WF4 (68 aa).

An N-terminal signal peptide occupies residues 1–22 (MKFTATFLMMFIFVLMVEPGEC). Residues 48-68 (GEQQDLDKRAVDEDPNVIVFE) constitute a propeptide that is removed on maturation.

This sequence belongs to the pleurocidin family.

Its subcellular location is the secreted. Its function is as follows. Antimicrobial peptide. This is Pleurocidin-like peptide WF4 (ple4) from Pseudopleuronectes americanus (Winter flounder).